Here is a 117-residue protein sequence, read N- to C-terminus: NADH-ubiquinone oxidoreductase chain 3 (117 aa).

The next 3 membrane-spanning stretches (helical) occupy residues 8–28 (LIYF…SFIF), 61–81 (LVAI…PWAV), and 86–106 (IGFF…IGFI).

The protein belongs to the complex I subunit 3 family.

The protein localises to the mitochondrion membrane. The catalysed reaction is a ubiquinone + NADH + 5 H(+)(in) = a ubiquinol + NAD(+) + 4 H(+)(out). In terms of biological role, core subunit of the mitochondrial membrane respiratory chain NADH dehydrogenase (Complex I) that is believed to belong to the minimal assembly required for catalysis. Complex I functions in the transfer of electrons from NADH to the respiratory chain. The immediate electron acceptor for the enzyme is believed to be ubiquinone. This is NADH-ubiquinone oxidoreductase chain 3 (ND3) from Tetraselmis subcordiformis (Marine green alga).